Here is a 123-residue protein sequence, read N- to C-terminus: MRIQSLLLLGVLLAVGSQLPAAFGRKKGEKSGRCPPDDGPCLLSVPDQCMEDSQCPFTRKCCYRACFRQCVPRISVKLGSCPEDQLQCLSPMNHLCHKDADCSGKKRCCPSACGRDCRDPARG.

An N-terminal signal peptide occupies residues 1-24; it reads MRIQSLLLLGVLLAVGSQLPAAFG. WAP domains lie at 27–73 and 74–121; these read KGEK…CVPR and ISVK…RDPA. Intrachain disulfides connect Cys-34-Cys-62, Cys-41-Cys-66, Cys-49-Cys-61, Cys-55-Cys-70, Cys-81-Cys-109, Cys-88-Cys-113, Cys-96-Cys-108, and Cys-102-Cys-117.

Its subcellular location is the secreted. Its function is as follows. Putative acid-stable proteinase inhibitor. The chain is WAP four-disulfide core domain protein 5 (WFDC5) from Callithrix jacchus (White-tufted-ear marmoset).